A 382-amino-acid polypeptide reads, in one-letter code: Glycerate dehydrogenase (382 aa).

Residues 175 to 176, 271 to 273, and Asp-297 contribute to the NAD(+) site; these read RI and CSR. Arg-273 is a catalytic residue. Glu-302 is a catalytic residue. His-320 serves as the catalytic Proton donor. An NAD(+)-binding site is contributed by 320–323; it reads HIAS.

It belongs to the D-isomer specific 2-hydroxyacid dehydrogenase family.

It localises to the peroxisome. The catalysed reaction is (R)-glycerate + NAD(+) = 3-hydroxypyruvate + NADH + H(+). It participates in photosynthesis; photorespiration; 3-phospho-D-glycerate from glycine: step 3/4. This Cucumis sativus (Cucumber) protein is Glycerate dehydrogenase (HPR-A).